Consider the following 259-residue polypeptide: MTFPNINPIIFSIGPLAISWYSLSYVIGILLGWFYANKIVEKFKPQITKKNLEDFITYAVIGIIVGGRLGFVLLYNPSRYFSNPIDILKTYEGGMSFHGGALGGIIAAYLFCRKYKINFLSLTDIIAPVVPIGLFLGRIANFINGELYGRITNSSFGMIFPNSDLMPRHPSQLYEAFFEGLVLFSILAYTTFKHKTLKKCGLNSGIFFTFYGLFRITIEIFREPDIQIGFILDSLTMGQILSVPMLLLGSYLICQSNPK.

Transmembrane regions (helical) follow at residues 9–29 (IIFS…VIGI), 55–75 (FITY…VLLY), 92–112 (EGGM…YLFC), and 117–137 (INFL…LFLG). Arginine 138 is a binding site for a 1,2-diacyl-sn-glycero-3-phospho-(1'-sn-glycerol). 3 consecutive transmembrane segments (helical) span residues 172-192 (QLYE…YTTF), 201-221 (GLNS…IEIF), and 228-248 (IGFI…MLLL).

It belongs to the Lgt family.

It localises to the cell inner membrane. The catalysed reaction is L-cysteinyl-[prolipoprotein] + a 1,2-diacyl-sn-glycero-3-phospho-(1'-sn-glycerol) = an S-1,2-diacyl-sn-glyceryl-L-cysteinyl-[prolipoprotein] + sn-glycerol 1-phosphate + H(+). It functions in the pathway protein modification; lipoprotein biosynthesis (diacylglyceryl transfer). Catalyzes the transfer of the diacylglyceryl group from phosphatidylglycerol to the sulfhydryl group of the N-terminal cysteine of a prolipoprotein, the first step in the formation of mature lipoproteins. This is Phosphatidylglycerol--prolipoprotein diacylglyceryl transferase from Rickettsia conorii (strain ATCC VR-613 / Malish 7).